Consider the following 533-residue polypeptide: Portal protein B (533 aa).

Belongs to the siphoviridae portal protein family. As to quaternary structure, homododecamer. Interacts with the terminase complex composed of two small and one large terminase subunits. Proteolytically cleaved by the viral protease during capsid maturation.

The protein resides in the virion. Forms the portal vertex of the capsid. This portal plays critical roles in head assembly, genome packaging, neck/tail attachment, and genome ejection. The portal protein multimerizes as a single ring-shaped homododecamer arranged around a central channel. Binds to the terminase subunits to form the packaging machine. This is Portal protein B from Escherichia phage lambda (Bacteriophage lambda).